Consider the following 1400-residue polypeptide: DNA-directed RNA polymerase subunit beta' (1400 aa).

Residues Cys71, Cys73, Cys86, and Cys89 each contribute to the Zn(2+) site. Mg(2+) contacts are provided by Asp462, Asp464, and Asp466. Residues Cys820, Cys893, Cys900, and Cys903 each contribute to the Zn(2+) site.

This sequence belongs to the RNA polymerase beta' chain family. As to quaternary structure, the RNAP catalytic core consists of 2 alpha, 1 beta, 1 beta' and 1 omega subunit. When a sigma factor is associated with the core the holoenzyme is formed, which can initiate transcription. Requires Mg(2+) as cofactor. Zn(2+) is required as a cofactor.

The enzyme catalyses RNA(n) + a ribonucleoside 5'-triphosphate = RNA(n+1) + diphosphate. In terms of biological role, DNA-dependent RNA polymerase catalyzes the transcription of DNA into RNA using the four ribonucleoside triphosphates as substrates. This Methylobacterium sp. (strain 4-46) protein is DNA-directed RNA polymerase subunit beta'.